The primary structure comprises 450 residues: Protein tweety homolog 1 (450 aa).

The Extracellular segment spans residues 1–43 (MGAPPGYRPSAWVHLLHQLPRADFQLRPVPSGFAPRDQEYQQA). Residues 44–64 (LLLVAALAGLGLGLSLIFIAV) traverse the membrane as a helical segment. Residues 65–88 (YLIRFCCCRPPEPHGAKSPPPGGG) lie on the Cytoplasmic side of the membrane. Residues 89–109 (CVTWSCIAALLVGCAGIGIGF) form a helical membrane-spanning segment. Residues 110–214 (YGNSETSDGV…DVTFVEEYRW (105 aa)) are Extracellular-facing. N-linked (GlcNAc...) asparagine glycosylation is present at Asn130. Residues 215-235 (LAYVLLLLLVLLVCLFTLLGL) traverse the membrane as a helical segment. Over 236–240 (AKQSK) the chain is Cytoplasmic. A helical transmembrane segment spans residues 241-261 (WLVVVMTAMSLLVLVLSWGSM). Topologically, residues 262-390 (GLEAATAVGL…LRGLCEDALE (129 aa)) are extracellular. Cystine bridges form between Cys275–Cys385 and Cys303–Cys370. 2 N-linked (GlcNAc...) asparagine glycosylation sites follow: Asn284 and Asn355. Residues 391 to 411 (GLLFLMLFSLLSAGALATTLC) traverse the membrane as a helical segment. The Cytoplasmic portion of the chain corresponds to 412 to 450 (SLPRAWALFPPSDDYDDTDDDDPFNPQESKRFVQWQSSI). Residues 428 to 450 (DTDDDDPFNPQESKRFVQWQSSI) are disordered. Position 440 is a phosphoserine (Ser440).

It belongs to the tweety family. As to quaternary structure, homotetramer; disulfide-linked. Homodimer. Post-translationally, N-glycosylated. Contains high-mannose, hybrid and complex oligosaccharides. As to expression, expressed in the astrocytes (at protein level). Restricted mainly to neural tissues. Strongly expressed in brain and eye.

It is found in the cell membrane. The catalysed reaction is chloride(in) = chloride(out). The enzyme catalyses L-glutamate(out) = L-glutamate(in). With respect to regulation, inhibited by (4-[(2-butyl-6,7-dichloro-2- cyclopentyl-2,3-dihydro-1-oxo-1H-inden-5-yl)oxy]butanoic acid). In terms of biological role, calcium-independent, swelling-dependent volume-regulated anion channel (VRAC-swell) which plays a pivotal role in the process of regulatory volume decrease (RVD) in the brain through the efflux of anions like chloride and organic osmolytes like glutamate. The chain is Protein tweety homolog 1 (Ttyh1) from Mus musculus (Mouse).